We begin with the raw amino-acid sequence, 208 residues long: Thymidylate kinase (208 aa).

7–14 (GIDGAGKT) contacts ATP.

Belongs to the thymidylate kinase family.

It catalyses the reaction dTMP + ATP = dTDP + ADP. Its function is as follows. Phosphorylation of dTMP to form dTDP in both de novo and salvage pathways of dTTP synthesis. In Xylella fastidiosa (strain 9a5c), this protein is Thymidylate kinase (tmk).